A 531-amino-acid polypeptide reads, in one-letter code: UDP-glucuronosyltransferase 1A7 (531 aa).

The first 25 residues, 1 to 25 (MAPADVPASLPLGLCLLLASGFGHA), serve as a signal peptide directing secretion. N-linked (GlcNAc...) asparagine glycans are attached at residues asparagine 71, asparagine 293, and asparagine 431. A helical membrane pass occupies residues 487–503 (LDVIGFLLAIVLTVVFI).

This sequence belongs to the UDP-glycosyltransferase family. Homodimer. Homooligomer. Interacts with UGT1A1, UGT1A3, UGT1A4, UGT1A6, UGT1A8, UGT1A9 and UGT1A10 to form heterodimers.

The protein resides in the endoplasmic reticulum membrane. The enzyme catalyses glucuronate acceptor + UDP-alpha-D-glucuronate = acceptor beta-D-glucuronoside + UDP + H(+). It carries out the reaction 17alpha-estradiol + UDP-alpha-D-glucuronate = 17alpha-estradiol 3-O-(beta-D-glucuronate) + UDP + H(+). It catalyses the reaction prunetin + UDP-alpha-D-glucuronate = prunetin-5-O-beta-D-glucuronide + UDP. The catalysed reaction is 5-epi-5-F2t-IsoP + UDP-alpha-D-glucuronate = 5-epi-5-F2t-IsoP-glucuronide + UDP + H(+). The enzyme catalyses (E)-ferulate + UDP-alpha-D-glucuronate = (E)-ferulic acid beta-D-glucuronate ester + UDP. It carries out the reaction candesartan + UDP-alpha-D-glucuronate = candesartan O-beta-D-glucuronoside + UDP. It catalyses the reaction SN-38 + UDP-alpha-D-glucuronate = SN-38 O-beta-D-glucuronide + UDP + H(+). The catalysed reaction is mycophenolate + UDP-alpha-D-glucuronate = mycophenolate 7-O-beta-D-glucuronide + UDP + H(+). Functionally, UDP-glucuronosyltransferase (UGT) that catalyzes phase II biotransformation reactions in which lipophilic substrates are conjugated with glucuronic acid to increase the metabolite's water solubility, thereby facilitating excretion into either the urine or bile. Essential for the elimination and detoxification of drugs, xenobiotics and endogenous compounds. Catalyzes the glucuronidation of endogenous estrogen hormone epiestradiol. Involved in the glucuronidation of F2-isoprostane (5-epi-5-F2t-IsoP). Involved in the glucuronidation of the phytochemical ferulic acid at the carboxylic acid group. Also catalyzes the glucuronidation of the isoflavones genistein, daidzein, glycitein, formononetin, biochanin A and prunetin, which are phytoestrogens with anticancer and cardiovascular properties. Involved in the glucuronidation of the AGTR1 angiotensin receptor antagonist caderastan, a drug which can inhibit the effect of angiotensin II. Involved in the biotransformation of 7-ethyl-10-hydroxycamptothecin (SN-38), the pharmacologically active metabolite of the anticancer drug irinotecan. Also metabolizes mycophenolate, an immunosuppressive agent. The sequence is that of UDP-glucuronosyltransferase 1A7 from Rattus norvegicus (Rat).